The sequence spans 229 residues: Cytochrome c oxidase subunit 2 (229 aa).

Residues 1-26 (MATWAQFGLQDASSPLMEELTYFHDY) lie on the Mitochondrial intermembrane side of the membrane. The helical transmembrane segment at 27-48 (ALIVLTLITILVFYGLVSLLLS) threads the bilayer. At 49–62 (SSTNRFFLEGQELE) the chain is on the mitochondrial matrix side. Residues 63-82 (TIWTVVPAFILIFIALPSLQ) form a helical membrane-spanning segment. At 83-229 (LLYLMDEVNN…ENWVAQYIEE (147 aa)) the chain is on the mitochondrial intermembrane side. His-161, Cys-196, Glu-198, Cys-200, His-204, and Met-207 together coordinate Cu cation. Residue Glu-198 participates in Mg(2+) binding.

The protein belongs to the cytochrome c oxidase subunit 2 family. Component of the cytochrome c oxidase (complex IV, CIV), a multisubunit enzyme composed of a catalytic core of 3 subunits and several supernumerary subunits. The complex exists as a monomer or a dimer and forms supercomplexes (SCs) in the inner mitochondrial membrane with ubiquinol-cytochrome c oxidoreductase (cytochrome b-c1 complex, complex III, CIII). Cu cation is required as a cofactor.

The protein localises to the mitochondrion inner membrane. It catalyses the reaction 4 Fe(II)-[cytochrome c] + O2 + 8 H(+)(in) = 4 Fe(III)-[cytochrome c] + 2 H2O + 4 H(+)(out). Its function is as follows. Component of the cytochrome c oxidase, the last enzyme in the mitochondrial electron transport chain which drives oxidative phosphorylation. The respiratory chain contains 3 multisubunit complexes succinate dehydrogenase (complex II, CII), ubiquinol-cytochrome c oxidoreductase (cytochrome b-c1 complex, complex III, CIII) and cytochrome c oxidase (complex IV, CIV), that cooperate to transfer electrons derived from NADH and succinate to molecular oxygen, creating an electrochemical gradient over the inner membrane that drives transmembrane transport and the ATP synthase. Cytochrome c oxidase is the component of the respiratory chain that catalyzes the reduction of oxygen to water. Electrons originating from reduced cytochrome c in the intermembrane space (IMS) are transferred via the dinuclear copper A center (CU(A)) of subunit 2 and heme A of subunit 1 to the active site in subunit 1, a binuclear center (BNC) formed by heme A3 and copper B (CU(B)). The BNC reduces molecular oxygen to 2 water molecules using 4 electrons from cytochrome c in the IMS and 4 protons from the mitochondrial matrix. This Paracentrotus lividus (Common sea urchin) protein is Cytochrome c oxidase subunit 2 (COII).